A 231-amino-acid polypeptide reads, in one-letter code: 5'-methylthioadenosine/S-adenosylhomocysteine nucleosidase (231 aa).

The active-site Proton acceptor is Glu12. Substrate is bound by residues Gly78, Ile153, and 174–175 (ME). Residue Asp198 is the Proton donor of the active site.

It belongs to the PNP/UDP phosphorylase family. MtnN subfamily.

The enzyme catalyses S-adenosyl-L-homocysteine + H2O = S-(5-deoxy-D-ribos-5-yl)-L-homocysteine + adenine. It catalyses the reaction S-methyl-5'-thioadenosine + H2O = 5-(methylsulfanyl)-D-ribose + adenine. The catalysed reaction is 5'-deoxyadenosine + H2O = 5-deoxy-D-ribose + adenine. Its pathway is amino-acid biosynthesis; L-methionine biosynthesis via salvage pathway; S-methyl-5-thio-alpha-D-ribose 1-phosphate from S-methyl-5'-thioadenosine (hydrolase route): step 1/2. Its function is as follows. Catalyzes the irreversible cleavage of the glycosidic bond in both 5'-methylthioadenosine (MTA) and S-adenosylhomocysteine (SAH/AdoHcy) to adenine and the corresponding thioribose, 5'-methylthioribose and S-ribosylhomocysteine, respectively. Also cleaves 5'-deoxyadenosine, a toxic by-product of radical S-adenosylmethionine (SAM) enzymes, into 5-deoxyribose and adenine. The polypeptide is 5'-methylthioadenosine/S-adenosylhomocysteine nucleosidase (Shewanella putrefaciens (strain CN-32 / ATCC BAA-453)).